The chain runs to 1203 residues: MVLLLILSVLLLKEDVRGSAQSSERRVVAHMPGDIIIGALFSVHHQPTVDKVHERKCGAVREQYGIQRVEAMLHTLERINSDPTLLPNITLGCEIRDSCWHSAVALEQSIEFIRDSLISSEEEEGLVRCVDGSSSFRSKKPIVGVIGPGSSSVAIQVQNLLQLFNIPQIAYSATSMDLSDKTLFKYFMRVVPSDAQQARAMVDIVKRYNWTYVSAVHTEGNYGESGMEAFKDMSAKEGICIAHSYKIYSNAGEQSFDKLLKKLRSHLPKARVVACFCEGMTVRGLLMAMRRLGLAGEFLLLGSDGWADRYDVTDGYQREAVGGITIKLQSPDVKWFDDYYLKLRPETNLRNPWFQEFWQHRFQCRLEGFAQENSKYNKTCNSSLTLRTHHVQDSKMGFVINAIYSMAYGLHNMQMSLCPGYAGLCDAMKPIDGRKLLDSLMKTNFTGVSGDMILFDENGDSPGRYEIMNFKEMGKDYFDYINVGSWDNGELKMDDDEVWSKKNNIIRSVCSEPCEKGQIKVIRKGEVSCCWTCTPCKENEYVFDEYTCKACQLGSWPTDDLTGCDLIPVQYLRWGDPEPIAAVVFACLGLLATLFVTVIFIIYRDTPVVKSSSRELCYIILAGICLGYLCTFCLIAKPKQIYCYLQRIGIGLSPAMSYSALVTKTNRIARILAGSKKKICTKKPRFMSACAQLVIAFILICIQLGIIVALFIMEPPDIMHDYPSIREVYLICNTTNLGVVTPLGYNGLLILSCTFYAFKTRNVPANFNEAKYIAFTMYTTCIIWLAFVPIYFGSNYKIITMCFSVSLSATVALGCMFVPKVYIILAKPERNVRSAFTTSTVVRMHVGDGKSSSAASRSSSLVNLWKRRGSSGETLRYKDRRLAQHKSEIECFTPKGSMGNGGRATMSSSNGKSVTWAQNEKSTRGQHLWQRLSVHINKKENPNQTAVIKPFPKSTESRGQGAGAGGGSGPGAAGAGSAGCTATGGPEPPDAGPKALYDVAEAEERFPAAARPRSPSPISTLSHLAGSAGRTDDDAPSLHSETAARSSSSQGSLMEQISSVVTRFTANITELNSMMLSTAAAPGPPGTPICSSYLIPKEIQLPTTMTTFAEIQPLPAIEVTGGAQPATGPSPAQETPAGAEAAPGKPDLEELVALTPPSPFRDSVDSGSTTPNSPVSESALCIPSSPKYDTLIIRDYTQSSSSL.

The N-terminal stretch at 1 to 18 (MVLLLILSVLLLKEDVRG) is a signal peptide. Residues 19 to 579 (SAQSSERRVV…QYLRWGDPEP (561 aa)) are Extracellular-facing. An intrachain disulfide couples Cys57 to Cys99. Tyr64 lines the L-glutamate pocket. Asn88 carries an N-linked (GlcNAc...) asparagine glycan. Residues Ser151 and 172–174 (SAT) each bind L-glutamate. N-linked (GlcNAc...) asparagine glycosylation occurs at Asn209. Tyr222 serves as a coordination point for L-glutamate. Disulfide bonds link Cys240–Cys529, Cys275–Cys277, Cys364–Cys380, Cys418–Cys425, Cys510–Cys530, Cys514–Cys533, Cys536–Cys548, and Cys551–Cys564. Asp304 contacts L-glutamate. 2 N-linked (GlcNAc...) asparagine glycosylation sites follow: Asn377 and Asn381. Lys395 contributes to the L-glutamate binding site. Asn444 carries an N-linked (GlcNAc...) asparagine glycan. Residues 580-602 (IAAVVFACLGLLATLFVTVIFII) form a helical membrane-spanning segment. Topologically, residues 603–612 (YRDTPVVKSS) are cytoplasmic. A helical transmembrane segment spans residues 613–635 (SRELCYIILAGICLGYLCTFCLI). Topologically, residues 636 to 643 (AKPKQIYC) are extracellular. Cys643 and Cys732 are disulfide-bonded. Residues 644–666 (YLQRIGIGLSPAMSYSALVTKTN) traverse the membrane as a helical segment. Topologically, residues 667-692 (RIARILAGSKKKICTKKPRFMSACAQ) are cytoplasmic. Residues 693 to 713 (LVIAFILICIQLGIIVALFIM) form a helical membrane-spanning segment. At 714-736 (EPPDIMHDYPSIREVYLICNTTN) the chain is on the extracellular side. Asn733 carries an N-linked (GlcNAc...) asparagine glycan. A helical membrane pass occupies residues 737 to 758 (LGVVTPLGYNGLLILSCTFYAF). Residues 759–771 (KTRNVPANFNEAK) are Cytoplasmic-facing. The chain crosses the membrane as a helical span at residues 772-794 (YIAFTMYTTCIIWLAFVPIYFGS). At 795-797 (NYK) the chain is on the extracellular side. A helical membrane pass occupies residues 798–819 (IITMCFSVSLSATVALGCMFVP). Topologically, residues 820-1203 (KVYIILAKPE…RDYTQSSSSL (384 aa)) are cytoplasmic. Ser860 carries the phosphoserine modification. Arg868 is modified (omega-N-methylarginine). Disordered regions lie at residues 892 to 1054 (FTPK…GSLM) and 1120 to 1182 (TGGA…ALCI). Over residues 905 to 920 (TMSSSNGKSVTWAQNE) the composition is skewed to polar residues. An Omega-N-methylarginine modification is found at Arg924. Positions 960-977 (QGAGAGGGSGPGAAGAGS) are enriched in gly residues. Positions 1007-1019 (PAAARPRSPSPIS) are enriched in low complexity. 2 positions are modified to phosphoserine: Ser1014 and Ser1016. Composition is skewed to polar residues over residues 1039-1054 (HSET…GSLM) and 1165-1176 (DSGSTTPNSPVS).

The protein belongs to the G-protein coupled receptor 3 family. As to quaternary structure, the PPXXF motif binds HOMER1, HOMER2 and HOMER3. Interacts with RYR1, RYR2, ITPR1, SHANK1 and SHANK3. Interacts with SIAH1 and TAMALIN. Interacts with NCDN. Interacts with NECAB2. Interacts with CAMK2A.

Its subcellular location is the cell membrane. In terms of biological role, G-protein coupled receptor for glutamate. Ligand binding causes a conformation change that triggers signaling via guanine nucleotide-binding proteins (G proteins) and modulates the activity of down-stream effectors. Signaling activates a phosphatidylinositol-calcium second messenger system and generates a calcium-activated chloride current. Plays an important role in the regulation of synaptic plasticity and the modulation of the neural network activity. The chain is Metabotropic glutamate receptor 5 (Grm5) from Mus musculus (Mouse).